The following is a 500-amino-acid chain: L-arabinose isomerase (500 aa).

Mn(2+)-binding residues include Glu-306, Glu-333, His-349, and His-448.

This sequence belongs to the arabinose isomerase family. Mn(2+) serves as cofactor.

The catalysed reaction is beta-L-arabinopyranose = L-ribulose. Its pathway is carbohydrate degradation; L-arabinose degradation via L-ribulose; D-xylulose 5-phosphate from L-arabinose (bacterial route): step 1/3. In terms of biological role, catalyzes the conversion of L-arabinose to L-ribulose. This is L-arabinose isomerase from Shewanella baltica (strain OS223).